A 206-amino-acid chain; its full sequence is Large ribosomal subunit protein uL4 (206 aa).

The interval 60 to 84 (TAKPFKQKGTGHARQGSKRSPQFRG) is disordered. Over residues 64–76 (FKQKGTGHARQGS) the composition is skewed to basic residues.

The protein belongs to the universal ribosomal protein uL4 family. In terms of assembly, part of the 50S ribosomal subunit.

In terms of biological role, one of the primary rRNA binding proteins, this protein initially binds near the 5'-end of the 23S rRNA. It is important during the early stages of 50S assembly. It makes multiple contacts with different domains of the 23S rRNA in the assembled 50S subunit and ribosome. Its function is as follows. Forms part of the polypeptide exit tunnel. This Rhodospirillum rubrum (strain ATCC 11170 / ATH 1.1.1 / DSM 467 / LMG 4362 / NCIMB 8255 / S1) protein is Large ribosomal subunit protein uL4.